A 372-amino-acid chain; its full sequence is Adaptive-response sensory kinase SasA (372 aa).

Residues 147-360 (MVAHELRTPL…CFHFTVPVWQ (214 aa)) enclose the Histidine kinase domain. The residue at position 150 (H150) is a Phosphohistidine; by autocatalysis.

As to quaternary structure, homooligomerizes. Interacts with KaiC. Participates in the KaiBC complex, whose core is composed of a KaiC homohexamer and 6 KaiB.

The enzyme catalyses ATP + protein L-histidine = ADP + protein N-phospho-L-histidine.. In terms of biological role, member of the two-component regulatory system SasA/RpaA involved in genome-wide circadian gene expression. One of several clock output pathways. Participates in the Kai clock protein complex, the main circadian regulator in cyanobacteria, via its interaction with KaiC. KaiC enhances the autophosphorylation activity of SasA, which then transfers its phosphate group to RpaA to activate it. In addition to its output function, recruits fold-shifted KaiB (KaiB(fs)) to KaiC to cooperatively form the KaiB(6):KaiC(6) complex (independent of SasA kinase activity). Required for robustness of the circadian rhythm of gene expression and is involved in clock output, also required for adaptation to light/dark cycles. The polypeptide is Adaptive-response sensory kinase SasA (Prochlorococcus marinus (strain MIT 9301)).